Consider the following 499-residue polypeptide: Protein nucleotidyltransferase YdiU (499 aa).

8 residues coordinate ATP: glycine 95, glycine 97, arginine 98, lysine 117, aspartate 129, glycine 130, arginine 180, and arginine 187. The Proton acceptor role is filled by aspartate 256. Residues asparagine 257 and aspartate 266 each coordinate Mg(2+). Residue aspartate 266 participates in ATP binding.

The protein belongs to the SELO family. Mg(2+) serves as cofactor. The cofactor is Mn(2+).

The enzyme catalyses L-seryl-[protein] + ATP = 3-O-(5'-adenylyl)-L-seryl-[protein] + diphosphate. The catalysed reaction is L-threonyl-[protein] + ATP = 3-O-(5'-adenylyl)-L-threonyl-[protein] + diphosphate. It catalyses the reaction L-tyrosyl-[protein] + ATP = O-(5'-adenylyl)-L-tyrosyl-[protein] + diphosphate. It carries out the reaction L-histidyl-[protein] + UTP = N(tele)-(5'-uridylyl)-L-histidyl-[protein] + diphosphate. The enzyme catalyses L-seryl-[protein] + UTP = O-(5'-uridylyl)-L-seryl-[protein] + diphosphate. The catalysed reaction is L-tyrosyl-[protein] + UTP = O-(5'-uridylyl)-L-tyrosyl-[protein] + diphosphate. Its function is as follows. Nucleotidyltransferase involved in the post-translational modification of proteins. It can catalyze the addition of adenosine monophosphate (AMP) or uridine monophosphate (UMP) to a protein, resulting in modifications known as AMPylation and UMPylation. This is Protein nucleotidyltransferase YdiU from Dechloromonas aromatica (strain RCB).